The chain runs to 343 residues: N-acetyl-gamma-glutamyl-phosphate reductase (343 aa).

The active site involves Cys147.

Belongs to the NAGSA dehydrogenase family. Type 1 subfamily.

The protein resides in the cytoplasm. The enzyme catalyses N-acetyl-L-glutamate 5-semialdehyde + phosphate + NADP(+) = N-acetyl-L-glutamyl 5-phosphate + NADPH + H(+). Its pathway is amino-acid biosynthesis; L-arginine biosynthesis; N(2)-acetyl-L-ornithine from L-glutamate: step 3/4. Functionally, catalyzes the NADPH-dependent reduction of N-acetyl-5-glutamyl phosphate to yield N-acetyl-L-glutamate 5-semialdehyde. This Staphylococcus aureus (strain USA300) protein is N-acetyl-gamma-glutamyl-phosphate reductase.